Here is a 511-residue protein sequence, read N- to C-terminus: Ribose import ATP-binding protein RbsA 3 (511 aa).

2 ABC transporter domains span residues 21 to 257 (LEMR…VGRD) and 256 to 511 (RDVE…TGNA). An ATP-binding site is contributed by 53–60 (GENGAGKS).

This sequence belongs to the ABC transporter superfamily. Ribose importer (TC 3.A.1.2.1) family. The complex is composed of an ATP-binding protein (RbsA), two transmembrane proteins (RbsC) and a solute-binding protein (RbsB).

It localises to the cell inner membrane. It catalyses the reaction D-ribose(out) + ATP + H2O = D-ribose(in) + ADP + phosphate + H(+). In terms of biological role, part of the ABC transporter complex RbsABC involved in ribose import. Responsible for energy coupling to the transport system. The protein is Ribose import ATP-binding protein RbsA 3 of Rhizobium etli (strain ATCC 51251 / DSM 11541 / JCM 21823 / NBRC 15573 / CFN 42).